Consider the following 115-residue polypeptide: Iron-sulfur cluster insertion protein ErpA (115 aa).

Residues C43, C107, and C109 each contribute to the iron-sulfur cluster site.

It belongs to the HesB/IscA family. Homodimer. Requires iron-sulfur cluster as cofactor.

Required for insertion of 4Fe-4S clusters for at least IspG. This Photorhabdus laumondii subsp. laumondii (strain DSM 15139 / CIP 105565 / TT01) (Photorhabdus luminescens subsp. laumondii) protein is Iron-sulfur cluster insertion protein ErpA.